A 107-amino-acid chain; its full sequence is U1-lycotoxin-Ls1o (107 aa).

The first 20 residues, Met-1–Ser-20, serve as a signal peptide directing secretion. The propeptide occupies Glu-21–Arg-41. Disulfide bonds link Cys-44-Cys-59, Cys-51-Cys-68, Cys-58-Cys-86, and Cys-70-Cys-84.

It belongs to the neurotoxin 19 (CSTX) family. 04 (U1-Lctx) subfamily. As to expression, expressed by the venom gland.

The protein localises to the secreted. This Lycosa singoriensis (Wolf spider) protein is U1-lycotoxin-Ls1o.